The sequence spans 295 residues: sn-glycerol-3-phosphate transport system permease protein UgpA (295 aa).

Over methionine 1–serine 11 the chain is Cytoplasmic. Residues tryptophan 12 to proline 32 form a helical membrane-spanning segment. Residues alanine 33–serine 80 are Periplasmic-facing. The 213-residue stretch at phenylalanine 72–glutamine 284 folds into the ABC transmembrane type-1 domain. Residues leucine 81–leucine 101 form a helical membrane-spanning segment. The Cytoplasmic portion of the chain corresponds to arginine 102–threonine 109. The chain crosses the membrane as a helical span at residues leucine 110–phenylalanine 130. At asparagine 131 to alanine 157 the chain is on the periplasmic side. Residues methionine 158–leucine 178 traverse the membrane as a helical segment. The Cytoplasmic portion of the chain corresponds to alanine 179–valine 207. A helical membrane pass occupies residues leucine 208 to phenylalanine 228. The Periplasmic portion of the chain corresponds to aspartate 229 to aspartate 262. Residues leucine 263 to isoleucine 283 traverse the membrane as a helical segment. At glutamine 284–glutamine 295 the chain is on the cytoplasmic side.

This sequence belongs to the binding-protein-dependent transport system permease family. UgpAE subfamily. In terms of assembly, the complex is composed of two ATP-binding proteins (UgpC), two transmembrane proteins (UgpA and UgpE) and a solute-binding protein (UgpB).

It is found in the cell inner membrane. Part of the ABC transporter complex UgpBAEC involved in sn-glycerol-3-phosphate (G3P) import. Probably responsible for the translocation of the substrate across the membrane. The polypeptide is sn-glycerol-3-phosphate transport system permease protein UgpA (ugpA) (Yersinia enterocolitica serotype O:8 / biotype 1B (strain NCTC 13174 / 8081)).